The sequence spans 91 residues: Small ribosomal subunit protein bS16 (91 aa).

The protein belongs to the bacterial ribosomal protein bS16 family.

The protein is Small ribosomal subunit protein bS16 of Lacticaseibacillus casei (strain BL23) (Lactobacillus casei).